The primary structure comprises 245 residues: Probable transcriptional regulatory protein SUN_1622 (245 aa).

This sequence belongs to the TACO1 family.

The protein resides in the cytoplasm. The protein is Probable transcriptional regulatory protein SUN_1622 of Sulfurovum sp. (strain NBC37-1).